A 326-amino-acid polypeptide reads, in one-letter code: Ribosomal RNA small subunit methyltransferase H (326 aa).

Residues 35–37, Asp53, Phe80, Asp101, and Gln108 contribute to the S-adenosyl-L-methionine site; that span reads GGY. Residues 260–306 form a disordered region; it reads EGVSRHLPQASNAGAGNPPPSFQAVSRRAVKPLDAETRVNPRSRSAR.

This sequence belongs to the methyltransferase superfamily. RsmH family.

Its subcellular location is the cytoplasm. It catalyses the reaction cytidine(1402) in 16S rRNA + S-adenosyl-L-methionine = N(4)-methylcytidine(1402) in 16S rRNA + S-adenosyl-L-homocysteine + H(+). Its function is as follows. Specifically methylates the N4 position of cytidine in position 1402 (C1402) of 16S rRNA. The chain is Ribosomal RNA small subunit methyltransferase H from Rhodospirillum rubrum (strain ATCC 11170 / ATH 1.1.1 / DSM 467 / LMG 4362 / NCIMB 8255 / S1).